The primary structure comprises 427 residues: Rhodocoxin reductase (427 aa).

Ser2–Glu34 is an FAD binding site. Ser144–Glu172 contributes to the NAD(+) binding site.

The protein belongs to the FAD-dependent oxidoreductase family. The cofactor is FAD.

The degradation of the thiocarbamate herbicide EPTC by cytochrome CYP116 (thcB) requires the participation of a flavoprotein, rhodocoxin reductase, and an iron-sulfur protein, rhodocoxin, to mediate the transfer of electrons from NADH to P450 for oxygen activation. This is Rhodocoxin reductase (thcD) from Rhodococcus erythropolis (Arthrobacter picolinophilus).